The sequence spans 327 residues: Acetyl-coenzyme A carboxylase carboxyl transferase subunit beta (327 aa).

A CoA carboxyltransferase N-terminal domain is found at 24–293 (LWIKCPDTGQ…LTVTTAVEAP (270 aa)). The span at 293–311 (PAEAAAKAEPEATTTEQPG) shows a compositional bias: low complexity. Positions 293-327 (PAEAAAKAEPEATTTEQPGAPAPTEPPAQPAAPQA) are disordered. The span at 312-327 (APAPTEPPAQPAAPQA) shows a compositional bias: pro residues.

This sequence belongs to the AccD/PCCB family. As to quaternary structure, acetyl-CoA carboxylase is a heterohexamer composed of biotin carboxyl carrier protein (AccB), biotin carboxylase (AccC) and two subunits each of ACCase subunit alpha (AccA) and ACCase subunit beta (AccD).

The protein resides in the cytoplasm. It catalyses the reaction N(6)-carboxybiotinyl-L-lysyl-[protein] + acetyl-CoA = N(6)-biotinyl-L-lysyl-[protein] + malonyl-CoA. The protein operates within lipid metabolism; malonyl-CoA biosynthesis; malonyl-CoA from acetyl-CoA: step 1/1. In terms of biological role, component of the acetyl coenzyme A carboxylase (ACC) complex. Biotin carboxylase (BC) catalyzes the carboxylation of biotin on its carrier protein (BCCP) and then the CO(2) group is transferred by the transcarboxylase to acetyl-CoA to form malonyl-CoA. This is Acetyl-coenzyme A carboxylase carboxyl transferase subunit beta from Rhodopseudomonas palustris (strain ATCC BAA-98 / CGA009).